A 394-amino-acid chain; its full sequence is Actin-related protein 2 (394 aa).

Residue methionine 1 is modified to N-acetylmethionine. ATP is bound by residues 160–162 (GDG) and 214–218 (RMIKE). The residue at position 299 (lysine 299) is an N6-acetyllysine. Residue 305–310 (GGSTMY) participates in ATP binding. At lysine 322 the chain carries N6-acetyllysine.

The protein belongs to the actin family. ARP2 subfamily. Component of the Arp2/3 complex composed of ACTR2/ARP2, ACTR3/ARP3, ARPC1B/p41-ARC, ARPC2/p34-ARC, ARPC3/p21-ARC, ARPC4/p20-ARC and ARPC5/p16-ARC. Interacts with AVIL.

It is found in the cytoplasm. The protein resides in the cytoskeleton. The protein localises to the cell projection. Its subcellular location is the nucleus. In terms of biological role, ATP-binding component of the Arp2/3 complex, a multiprotein complex that mediates actin polymerization upon stimulation by nucleation-promoting factor (NPF). The Arp2/3 complex mediates the formation of branched actin networks in the cytoplasm, providing the force for cell motility. Seems to contact the pointed end of the daughter actin filament. In podocytes, required for the formation of lamellipodia downstream of AVIL and PLCE1 regulation. In addition to its role in the cytoplasmic cytoskeleton, the Arp2/3 complex also promotes actin polymerization in the nucleus, thereby regulating gene transcription and repair of damaged DNA. The Arp2/3 complex promotes homologous recombination (HR) repair in response to DNA damage by promoting nuclear actin polymerization, leading to drive motility of double-strand breaks (DSBs). In Pongo abelii (Sumatran orangutan), this protein is Actin-related protein 2 (ACTR2).